A 150-amino-acid chain; its full sequence is Large ribosomal subunit protein bL9 (150 aa).

It belongs to the bacterial ribosomal protein bL9 family.

In terms of biological role, binds to the 23S rRNA. This is Large ribosomal subunit protein bL9 from Limosilactobacillus reuteri (strain DSM 20016) (Lactobacillus reuteri).